The primary structure comprises 170 residues: E1B protein, small T-antigen (170 aa).

Belongs to the adenoviridae E1B 19 kDa protein family.

The sequence is that of E1B protein, small T-antigen from Canine adenovirus serotype 2 (CAdV-2).